A 464-amino-acid polypeptide reads, in one-letter code: Cysteine--tRNA ligase (464 aa).

Cysteine 29 provides a ligand contact to Zn(2+). The 'HIGH' region motif lies at proline 31–asparagine 41. Cysteine 224, histidine 249, and glutamate 253 together coordinate Zn(2+). Residues lysine 282–serine 286 carry the 'KMSKS' region motif. Lysine 285 lines the ATP pocket.

Belongs to the class-I aminoacyl-tRNA synthetase family. In terms of assembly, monomer. The cofactor is Zn(2+).

The protein resides in the cytoplasm. The enzyme catalyses tRNA(Cys) + L-cysteine + ATP = L-cysteinyl-tRNA(Cys) + AMP + diphosphate. This is Cysteine--tRNA ligase from Afipia carboxidovorans (strain ATCC 49405 / DSM 1227 / KCTC 32145 / OM5) (Oligotropha carboxidovorans).